Reading from the N-terminus, the 1269-residue chain is Protein cramped-like (1269 aa).

A compositionally biased stretch (gly residues) spans 1–12; sequence MTVKLGDGGSGE. Residues 1 to 165 form a disordered region; the sequence is MTVKLGDGGS…GKKVRRQWES (165 aa). 2 stretches are compositionally biased toward basic and acidic residues: residues 13-24 and 43-52; these read DGLKKLGKRAAD and SGTKRDEKTP. A compositionally biased stretch (pro residues) spans 59–74; it reads PPAPPGAPQAPSPPQG. Over residues 105-123 the composition is skewed to gly residues; that stretch reads GNAGGSGPRGKGAEGGGSS. Residues 124–147 show a composition bias toward low complexity; sequence SGNVSGVAPAAPAGGSRSSSRNLG. Residues 151–165 are compositionally biased toward basic and acidic residues; it reads GEKEEGKKVRRQWES. The SANT domain maps to 161 to 224; that stretch reads RQWESWSTED…FYYRTWHKIT (64 aa). Phosphoserine is present on serine 307. 6 disordered regions span residues 450 to 541, 581 to 666, 757 to 827, 976 to 1034, 1055 to 1092, and 1115 to 1157; these read IQSG…PGAL, DTRP…EVPA, VRPA…NDSD, EGLS…DSFQ, IPLS…SQGE, and VPLS…PSDS. Residues 485 to 507 are compositionally biased toward low complexity; the sequence is SSGESSPESAPGEGAALSLSSPD. Composition is skewed to basic and acidic residues over residues 508–518 and 526–535; these read APDRPPPRHQD and TPAEGRDSPT. 3 stretches are compositionally biased toward polar residues: residues 757–767, 774–806, and 982–1002; these read VRPAQEEQSMT, TVSS…SSGL, and SPLS…TGTH. 2 stretches are compositionally biased toward low complexity: residues 1055 to 1070 and 1125 to 1140; these read IPLS…LSPP and SDSS…SPQP. A Phosphoserine modification is found at serine 1268.

This sequence belongs to the cramped family.

The protein resides in the nucleus. This Homo sapiens (Human) protein is Protein cramped-like.